A 133-amino-acid polypeptide reads, in one-letter code: MPVTDSIADFITRIRNAGSAKNKTTDIPYTRVRENLSKLLVEKGYIQNYTVIKTEADKFPFIRVELKYTADGRHAIKEISRVSSPGRRVYQGKDIKRYLGGLGLFILSTSKGILTDKEAREQNVGGEVLFRIY.

This sequence belongs to the universal ribosomal protein uS8 family. In terms of assembly, part of the 30S ribosomal subunit. Contacts proteins S5 and S12.

One of the primary rRNA binding proteins, it binds directly to 16S rRNA central domain where it helps coordinate assembly of the platform of the 30S subunit. This chain is Small ribosomal subunit protein uS8, found in Chlorobaculum parvum (strain DSM 263 / NCIMB 8327) (Chlorobium vibrioforme subsp. thiosulfatophilum).